The chain runs to 664 residues: Zinc finger protein 800 (664 aa).

The segment at 69–91 adopts a C2H2-type 1; degenerate zinc-finger fold; that stretch reads FECKLCRSLFRGLPNLITHKKFY. Lys132 participates in a covalent cross-link: Glycyl lysine isopeptide (Lys-Gly) (interchain with G-Cter in SUMO2). Composition is skewed to polar residues over residues 154 to 179 and 207 to 224; these read IEVT…EQSK and SDEQ…SDNS. Residues 154–224 are disordered; the sequence is IEVTESSSTP…QADLETSDNS (71 aa). The C2H2-type 2 zinc finger occupies 230-253; sequence LICCLCRKEFNSRRGVRRHIRKVH. Residue Lys279 forms a Glycyl lysine isopeptide (Lys-Gly) (interchain with G-Cter in SUMO2) linkage. A C2H2-type 3 zinc finger spans residues 287 to 310; the sequence is RSCPVCCKSFATKANVRRHFDEVH. Ser317 bears the Phosphoserine mark. The residue at position 319 (Thr319) is a Phosphothreonine. A disordered region spans residues 328 to 349; sequence QPLFLDSISPKKSFKTRKQKSS. Ser336 carries the phosphoserine modification. Over residues 339 to 348 the composition is skewed to basic residues; it reads KSFKTRKQKS. The C2H2-type 4 zinc finger occupies 357–382; that stretch reads TACKCLLCKRKYSSQIMLKRHMQIVH. Positions 388 to 476 are disordered; the sequence is GTNSKREKGP…GGQQKTRKPK (89 aa). A Glycyl lysine isopeptide (Lys-Gly) (interchain with G-Cter in SUMO2) cross-link involves residue Lys392. A Glycyl lysine isopeptide (Lys-Gly) (interchain with G-Cter in SUMO1); alternate cross-link involves residue Lys409. A Glycyl lysine isopeptide (Lys-Gly) (interchain with G-Cter in SUMO2); alternate cross-link involves residue Lys409. The segment covering 416-436 has biased composition (polar residues); the sequence is VESSPPSITHSPQNELKGTNH. 6 positions are modified to phosphoserine: Ser422, Ser426, Ser455, Ser457, Ser460, and Ser462. Over residues 458 to 470 the composition is skewed to polar residues; it reads PKSTSPSAAGGQQ. Lys476 is covalently cross-linked (Glycyl lysine isopeptide (Lys-Gly) (interchain with G-Cter in SUMO2)). 2 C2H2-type zinc fingers span residues 486–508 and 519–542; these read LYCK…IELH and YKCP…TVVH. Disordered regions lie at residues 574–599 and 635–664; these read KRGP…PSKK and HHKK…KALV. Positions 577–591 are enriched in basic and acidic residues; sequence PSRDEAKHSDSKHDG. A Glycyl lysine isopeptide (Lys-Gly) (interchain with G-Cter in SUMO2) cross-link involves residue Lys599. The C2H2-type 7 zinc finger occupies 618-640; sequence HRCNKCGKAFAKKTYLEHHKKTH. A compositionally biased stretch (basic residues) spans 653 to 664; sequence TKGRSTRSKALV.

This sequence belongs to the krueppel C2H2-type zinc-finger protein family.

It is found in the nucleus. In terms of biological role, may be involved in transcriptional regulation. This Homo sapiens (Human) protein is Zinc finger protein 800 (ZNF800).